An 826-amino-acid polypeptide reads, in one-letter code: DEAD-box ATP-dependent RNA helicase 13 (826 aa).

Basic and acidic residues predominate over residues 1-10; that stretch reads MVTGDKESSL. Disordered regions lie at residues 1–62 and 76–175; these read MVTG…QLDG and HLTL…GDDT. Residues 11 to 22 show a composition bias toward basic residues; the sequence is MKKRNKRSHKRK. Polar residues predominate over residues 49 to 58; sequence SFSTLFSGSG. Residues 94–128 are compositionally biased toward acidic residues; it reads EDDDDTNETVDEMIEGEEAEEDGEGRDDEDDEDDE. Positions 125 to 166 form a coiled coil; the sequence is EDDEETRKKKEKKAKRNKEKKKEKKKKKQKKINEAAKNQDAS. Residues 133–154 are compositionally biased toward basic residues; it reads KKEKKAKRNKEKKKEKKKKKQK. A Q motif motif is present at residues 190 to 218; sequence SAWSSMRLHPLLMKSIYRLDFKEPTKIQK. In terms of domain architecture, Helicase ATP-binding spans 222–439; that stretch reads NVAAYQGKDV…KLKRGSSKSK (218 aa). Position 235–242 (235–242) interacts with ATP; that stretch reads AETGSGKT. Residues 363-366 carry the DEAD box motif; it reads DEAD. One can recognise a Helicase C-terminal domain in the interval 476-644; that stretch reads KIEESFIKCE…YMPAVRKRLY (169 aa). Coiled-coil stretches lie at residues 666 to 712 and 783 to 810; these read LKKH…TLLS and KMKGQSAEKRRDIASLKKKRKEEKIGRR. The tract at residues 783 to 826 is disordered; it reads KMKGQSAEKRRDIASLKKKRKEEKIGRRDQRRNQKKQRKLMASS. Composition is skewed to basic and acidic residues over residues 788-797 and 804-814; these read SAEKRRDIAS and EEKIGRRDQRR. Residues 815 to 826 are compositionally biased toward basic residues; it reads NQKKQRKLMASS.

The protein belongs to the DEAD box helicase family. DDX24/MAK5 subfamily.

It catalyses the reaction ATP + H2O = ADP + phosphate + H(+). The protein is DEAD-box ATP-dependent RNA helicase 13 (RH13) of Arabidopsis thaliana (Mouse-ear cress).